Here is a 535-residue protein sequence, read N- to C-terminus: MAAAVAAAAAMRSRILQVSSKVNATWYPASSFSSSSVPTVKLFIDGKFVESKSDKWIDIHNPATNEVVGRVPQSTKAEMDAAVESCKRAFPAWADTSILSRQQVLLRYQQLIKENLKEIARLITLEQGKTLADAEGDVFRGLQVVEHACSVTSLMLGETMPSITKDMDLYSYRLPLGVCAGIAPFNFPAMIPLWMFPMAMVCGNTFLMKPSERVPGATMLLAKLLQDSGAPDGTLNIIHGQHDAVNFICDHPDIKAISFVGSNQAGEYIFERGSRNGKRVQANMGAKNHGVVMPDANKENTLNQLVGAAFGAAGQRCMALSTAILVGEAKKWLPELVDRAKNLRVNAGDQPGADLGPLITPQAKERVCNLIDSGTKEGASILLDGRRIKVKGYENGNFVGPTIISNVKPSMTCYKEEIFGPVLVVLETETLDEAIKIVNDNPYGNGTAIFTTNGATARKYAHMVDVGQVGVNVPIPVPLPMFSFTGSRSSFRGDTNFYGKQGIQFYTQLKTITSQWKEEDATLSSPAVVMPTMGR.

The N-terminal 32 residues, 1-32 (MAAAVAAAAAMRSRILQVSSKVNATWYPASSF), are a transit peptide targeting the mitochondrion. 4 positions are modified to N6-acetyllysine; alternate: Lys-47, Lys-52, Lys-55, and Lys-76. An N6-succinyllysine; alternate mark is found at Lys-47, Lys-52, Lys-55, and Lys-76. At Lys-87 the chain carries N6-acetyllysine. N6-acetyllysine; alternate occurs at positions 117 and 129. 2 positions are modified to N6-succinyllysine; alternate: Lys-117 and Lys-129. Positions 183, 185, 209, 212, 213, and 262 each coordinate NAD(+). Ser-262 carries the phosphoserine modification. Lys-298 carries the post-translational modification N6-acetyllysine. Residue Cys-317 is the Nucleophile of the active site. Lys-330 and Lys-331 each carry N6-acetyllysine. N6-acetyllysine; alternate is present on residues Lys-364 and Lys-376. Residues Lys-364 and Lys-376 each carry the N6-succinyllysine; alternate modification. Ser-380 carries the phosphoserine modification. An N6-succinyllysine modification is found at Lys-391. NAD(+) is bound at residue Glu-417. Lys-500 carries the post-translational modification N6-acetyllysine. N6-succinyllysine is present on Lys-517.

The protein belongs to the aldehyde dehydrogenase family. Homotetramer. Post-translationally, acetylation of Lys-55; Lys-117 and Lys-331 is observed in liver mitochondria from fasted mice but not from fed mice.

The protein localises to the mitochondrion. It catalyses the reaction 3-oxopropanoate + NAD(+) + CoA + H2O = hydrogencarbonate + acetyl-CoA + NADH + H(+). The catalysed reaction is 2-methyl-3-oxopropanoate + NAD(+) + CoA + H2O = propanoyl-CoA + hydrogencarbonate + NADH + H(+). The enzyme catalyses (R)-2-methyl-3-oxopropanoate + NAD(+) + CoA + H2O = propanoyl-CoA + hydrogencarbonate + NADH + H(+). It carries out the reaction (S)-2-methyl-3-oxopropanoate + NAD(+) + CoA + H2O = propanoyl-CoA + hydrogencarbonate + NADH + H(+). Its function is as follows. Malonate and methylmalonate semialdehyde dehydrogenase involved in the catabolism of valine, thymine, and compounds catabolized by way of beta-alanine, including uracil and cytidine. This is Methylmalonate-semialdehyde/malonate-semialdehyde dehydrogenase [acylating], mitochondrial from Mus musculus (Mouse).